The chain runs to 248 residues: Ubiquinone/menaquinone biosynthesis C-methyltransferase UbiE (248 aa).

S-adenosyl-L-methionine contacts are provided by residues T71, D92, and 120–121; that span reads DA.

It belongs to the class I-like SAM-binding methyltransferase superfamily. MenG/UbiE family.

It catalyses the reaction a 2-demethylmenaquinol + S-adenosyl-L-methionine = a menaquinol + S-adenosyl-L-homocysteine + H(+). The catalysed reaction is a 2-methoxy-6-(all-trans-polyprenyl)benzene-1,4-diol + S-adenosyl-L-methionine = a 5-methoxy-2-methyl-3-(all-trans-polyprenyl)benzene-1,4-diol + S-adenosyl-L-homocysteine + H(+). It participates in quinol/quinone metabolism; menaquinone biosynthesis; menaquinol from 1,4-dihydroxy-2-naphthoate: step 2/2. Its pathway is cofactor biosynthesis; ubiquinone biosynthesis. Functionally, methyltransferase required for the conversion of demethylmenaquinol (DMKH2) to menaquinol (MKH2) and the conversion of 2-polyprenyl-6-methoxy-1,4-benzoquinol (DDMQH2) to 2-polyprenyl-3-methyl-6-methoxy-1,4-benzoquinol (DMQH2). The chain is Ubiquinone/menaquinone biosynthesis C-methyltransferase UbiE from Methylococcus capsulatus (strain ATCC 33009 / NCIMB 11132 / Bath).